We begin with the raw amino-acid sequence, 156 residues long: ATP synthase subunit b (156 aa).

Residues leucine 7 to leucine 29 form a helical membrane-spanning segment.

It belongs to the ATPase B chain family. In terms of assembly, F-type ATPases have 2 components, F(1) - the catalytic core - and F(0) - the membrane proton channel. F(1) has five subunits: alpha(3), beta(3), gamma(1), delta(1), epsilon(1). F(0) has three main subunits: a(1), b(2) and c(10-14). The alpha and beta chains form an alternating ring which encloses part of the gamma chain. F(1) is attached to F(0) by a central stalk formed by the gamma and epsilon chains, while a peripheral stalk is formed by the delta and b chains.

The protein resides in the cell inner membrane. F(1)F(0) ATP synthase produces ATP from ADP in the presence of a proton or sodium gradient. F-type ATPases consist of two structural domains, F(1) containing the extramembraneous catalytic core and F(0) containing the membrane proton channel, linked together by a central stalk and a peripheral stalk. During catalysis, ATP synthesis in the catalytic domain of F(1) is coupled via a rotary mechanism of the central stalk subunits to proton translocation. In terms of biological role, component of the F(0) channel, it forms part of the peripheral stalk, linking F(1) to F(0). The chain is ATP synthase subunit b from Vibrio parahaemolyticus serotype O3:K6 (strain RIMD 2210633).